Reading from the N-terminus, the 88-residue chain is U13-theraphotoxin-Cg1a (88 aa).

Positions methionine 1–alanine 21 are cleaved as a signal peptide. Positions alanine 22–arginine 52 are excised as a propeptide. 3 cysteine pairs are disulfide-bonded: cysteine 54–cysteine 68, cysteine 61–cysteine 73, and cysteine 67–cysteine 80.

The protein belongs to the neurotoxin 10 (Hwtx-1) family. 41 (Jztx-36) subfamily. Expressed by the venom gland.

The protein resides in the secreted. Probable ion channel inhibitor. The protein is U13-theraphotoxin-Cg1a of Chilobrachys guangxiensis (Chinese earth tiger tarantula).